A 231-amino-acid chain; its full sequence is Large ribosomal subunit protein uL1 (231 aa).

This sequence belongs to the universal ribosomal protein uL1 family. In terms of assembly, part of the 50S ribosomal subunit.

Binds directly to 23S rRNA. The L1 stalk is quite mobile in the ribosome, and is involved in E site tRNA release. Its function is as follows. Protein L1 is also a translational repressor protein, it controls the translation of the L11 operon by binding to its mRNA. This is Large ribosomal subunit protein uL1 from Acetivibrio thermocellus (strain ATCC 27405 / DSM 1237 / JCM 9322 / NBRC 103400 / NCIMB 10682 / NRRL B-4536 / VPI 7372) (Clostridium thermocellum).